A 517-amino-acid chain; its full sequence is Transcription factor MTB3 (517 aa).

The disordered stretch occupies residues 290–331; sequence GNSSNGYRSDEGEGKLYKEELDERKPRKRGRKPANGREEALN. The span at 297 to 314 shows a compositional bias: basic and acidic residues; sequence RSDEGEGKLYKEELDERK. The tract at residues 327 to 340 is basic motif; degenerate; it reads EEALNHVEAERQRR. Residues 327-376 enclose the bHLH domain; that stretch reads EEALNHVEAERQRREKLNQRFYALRAVVPNISKMDKASLLGDAIAYITDL. Positions 341–376 are helix-loop-helix motif; sequence EKLNQRFYALRAVVPNISKMDKASLLGDAIAYITDL.

The protein localises to the nucleus. Functionally, transcription factor that negatively regulates jasmonate (JA) signaling. Negatively regulates JA-dependent response to wounding, JA-induced expression of defense genes, JA-dependent responses against herbivorous insects, and JA-dependent resistance against Botrytis cinerea infection. Plays a positive role in resistance against the bacterial pathogen Pseudomonas syringae pv tomato DC3000. The protein is Transcription factor MTB3 of Solanum lycopersicum (Tomato).